Reading from the N-terminus, the 212-residue chain is phospholipase A2 inhibitor and Ly6/PLAUR domain-containing protein (212 aa).

The signal sequence occupies residues 1–24 (MILFRRHRTFLLAFTLLCTLLGLG). The region spanning 27-117 (LTCEVCKGSG…NSGSVPPPLN (91 aa)) is the UPAR/Ly6 domain. 7 disulfides stabilise this stretch: cysteine 29–cysteine 53, cysteine 32–cysteine 39, cysteine 46–cysteine 74, cysteine 80–cysteine 101, cysteine 102–cysteine 107, cysteine 126–cysteine 152, and cysteine 145–cysteine 173.

Belongs to the CNF-like-inhibitor family.

It localises to the secreted. The protein is phospholipase A2 inhibitor and Ly6/PLAUR domain-containing protein (Pinlyp) of Mus musculus (Mouse).